The following is a 291-amino-acid chain: Kynurenine formamidase (291 aa).

Positions 33 to 37 match the HGGXW motif; the sequence is HGGAW. Residue Ser107 is the Nucleophile of the active site. Active-site residues include Asp242 and His280.

Belongs to the kynurenine formamidase family. In terms of assembly, homodimer.

The enzyme catalyses N-formyl-L-kynurenine + H2O = L-kynurenine + formate + H(+). It participates in amino-acid degradation; L-tryptophan degradation via kynurenine pathway; L-kynurenine from L-tryptophan: step 2/2. Functionally, catalyzes the hydrolysis of N-formyl-L-kynurenine to L-kynurenine, the second step in the kynurenine pathway of tryptophan degradation. Kynurenine may be further oxidized to nicotinic acid, NAD(H) and NADP(H). Required for elimination of toxic metabolites. The chain is Kynurenine formamidase from Debaryomyces hansenii (strain ATCC 36239 / CBS 767 / BCRC 21394 / JCM 1990 / NBRC 0083 / IGC 2968) (Yeast).